Here is a 451-residue protein sequence, read N- to C-terminus: Phosphoglucosamine mutase (451 aa).

Serine 101 functions as the Phosphoserine intermediate in the catalytic mechanism. Positions 101, 243, 245, and 247 each coordinate Mg(2+). Serine 101 carries the post-translational modification Phosphoserine.

The protein belongs to the phosphohexose mutase family. Requires Mg(2+) as cofactor. Post-translationally, activated by phosphorylation.

It carries out the reaction alpha-D-glucosamine 1-phosphate = D-glucosamine 6-phosphate. Functionally, catalyzes the conversion of glucosamine-6-phosphate to glucosamine-1-phosphate. In Thermodesulfovibrio yellowstonii (strain ATCC 51303 / DSM 11347 / YP87), this protein is Phosphoglucosamine mutase.